The following is a 397-amino-acid chain: Phosphoglycerate kinase (397 aa).

Substrate-binding positions include 25-27 (DLN), R41, 64-67 (HLGR), R118, and R151. ATP is bound by residues K202, E324, and 350–353 (GGDT).

This sequence belongs to the phosphoglycerate kinase family. As to quaternary structure, monomer.

The protein localises to the cytoplasm. It catalyses the reaction (2R)-3-phosphoglycerate + ATP = (2R)-3-phospho-glyceroyl phosphate + ADP. It functions in the pathway carbohydrate degradation; glycolysis; pyruvate from D-glyceraldehyde 3-phosphate: step 2/5. The sequence is that of Phosphoglycerate kinase from Leptothrix cholodnii (strain ATCC 51168 / LMG 8142 / SP-6) (Leptothrix discophora (strain SP-6)).